The chain runs to 314 residues: Methionyl-tRNA formyltransferase (314 aa).

110–113 (SLLP) provides a ligand contact to (6S)-5,6,7,8-tetrahydrofolate.

This sequence belongs to the Fmt family.

The catalysed reaction is L-methionyl-tRNA(fMet) + (6R)-10-formyltetrahydrofolate = N-formyl-L-methionyl-tRNA(fMet) + (6S)-5,6,7,8-tetrahydrofolate + H(+). Attaches a formyl group to the free amino group of methionyl-tRNA(fMet). The formyl group appears to play a dual role in the initiator identity of N-formylmethionyl-tRNA by promoting its recognition by IF2 and preventing the misappropriation of this tRNA by the elongation apparatus. This is Methionyl-tRNA formyltransferase from Bacillus thuringiensis subsp. konkukian (strain 97-27).